The sequence spans 266 residues: Trypsin 5G1 (266 aa).

An N-terminal signal peptide occupies residues 1–18; sequence MTRIILILTATFFACALG. A propeptide spans 19–39 (activation peptide); that stretch reads ASTGGSHPLRPWWNALRSSGR. Residues 40–265 form the Peptidase S1 domain; sequence IVGGFEVPVE…VRDWVKEVSG (226 aa). C66 and C82 are oxidised to a cystine. Catalysis depends on charge relay system residues H81 and D125. 2 disulfides stabilise this stretch: C190–C206 and C217–C241. S221 serves as the catalytic Charge relay system.

The protein belongs to the peptidase S1 family. As to expression, midgut.

Its subcellular location is the secreted. It is found in the extracellular space. It catalyses the reaction Preferential cleavage: Arg-|-Xaa, Lys-|-Xaa.. Functionally, major function may be to aid in digestion of the blood meal. This chain is Trypsin 5G1, found in Aedes aegypti (Yellowfever mosquito).